The following is a 569-amino-acid chain: Thiol:disulfide interchange protein DsbD (569 aa).

A signal peptide spans 1 to 19; sequence MAQRILTLILLLCSTSAFA. Cystine bridges form between cysteine 122/cysteine 128 and cysteine 187/cysteine 309. Transmembrane regions (helical) follow at residues 168-188, 213-233, 248-268, 301-321, 328-348, 362-382, and 391-411; these read LPFSALWALLIGIGIAFTPCV, LLTFIYVQGMALTYTALGLVV, YVLIGLALVFTLLALSMFGLF, IAGLICSPCTTAPLSAILLYI, WLGGGTLYLYALGMGLPLILI, WMEHVKTAFGFVILALPVFLL, and GLRLWSLLGVAFFGWAFITSL. A Thioredoxin domain is found at 430 to 569; it reads LVSVRPLQDW…FSAHLRDRQP (140 aa). Cysteine 484 and cysteine 487 form a disulfide bridge.

It belongs to the thioredoxin family. DsbD subfamily.

The protein resides in the cell inner membrane. It carries out the reaction [protein]-dithiol + NAD(+) = [protein]-disulfide + NADH + H(+). The catalysed reaction is [protein]-dithiol + NADP(+) = [protein]-disulfide + NADPH + H(+). Functionally, required to facilitate the formation of correct disulfide bonds in some periplasmic proteins and for the assembly of the periplasmic c-type cytochromes. Acts by transferring electrons from cytoplasmic thioredoxin to the periplasm. This transfer involves a cascade of disulfide bond formation and reduction steps. The polypeptide is Thiol:disulfide interchange protein DsbD (Citrobacter koseri (strain ATCC BAA-895 / CDC 4225-83 / SGSC4696)).